The following is a 218-amino-acid chain: MATLGTGMRCLKSCVFVLNIICLLCSLVLIGAGAYVEVKFSQYGDNLHKVWQAAPIAIIVVGVIILIVSFLGCCGAIKENVCMLYMYAFFLVVLLIAELAAAIVAVVYKDRIDSEIDALMTGALDKPTKEITEFMNLIQSSFHCCGAKGPDDYRGNVPASCKEENLTYTEGCVSVFGAFLKRNLVIVACVAFGVCFFQLLSIVIACCLGRQIKEYENV.

Over 1 to 12 the chain is Cytoplasmic; it reads MATLGTGMRCLK. A helical membrane pass occupies residues 13 to 36; the sequence is SCVFVLNIICLLCSLVLIGAGAYV. Topologically, residues 37–55 are extracellular; sequence EVKFSQYGDNLHKVWQAAP. The chain crosses the membrane as a helical span at residues 56-71; sequence IAIIVVGVIILIVSFL. Residues 72–82 are Cytoplasmic-facing; the sequence is GCCGAIKENVC. A helical transmembrane segment spans residues 83–108; sequence MLYMYAFFLVVLLIAELAAAIVAVVY. Over 109 to 183 the chain is Extracellular; the sequence is KDRIDSEIDA…SVFGAFLKRN (75 aa). Asparagine 165 carries an N-linked (GlcNAc...) asparagine glycan. Residues 184-205 traverse the membrane as a helical segment; that stretch reads LVIVACVAFGVCFFQLLSIVIA. The Cytoplasmic segment spans residues 206-218; that stretch reads CCLGRQIKEYENV.

It belongs to the tetraspanin (TM4SF) family.

The protein resides in the membrane. The chain is 23 kDa integral membrane protein from Schistosoma mansoni (Blood fluke).